Reading from the N-terminus, the 93-residue chain is Acylphosphatase (93 aa).

An intrachain disulfide couples Cys5 to Cys49. Positions 5–93 (CIIAWVYGRV…ETLTGFSIRY (89 aa)) constitute an Acylphosphatase-like domain. Active-site residues include Arg20 and Asn38.

It belongs to the acylphosphatase family.

It catalyses the reaction an acyl phosphate + H2O = a carboxylate + phosphate + H(+). The chain is Acylphosphatase from Salmonella typhi.